A 138-amino-acid polypeptide reads, in one-letter code: Acidic phospholipase A2 beta (138 aa).

An N-terminal signal peptide occupies residues 1 to 16 (MRTLWIVAVLLLGVEG). 7 disulfides stabilise this stretch: Cys-42–Cys-131, Cys-44–Cys-60, Cys-59–Cys-111, Cys-65–Cys-138, Cys-66–Cys-104, Cys-73–Cys-97, and Cys-91–Cys-102. Residues Tyr-43, Gly-45, and Gly-47 each contribute to the Ca(2+) site. The active site involves His-63. Asp-64 contacts Ca(2+). Asp-105 is a catalytic residue.

The protein belongs to the phospholipase A2 family. Group II subfamily. D49 sub-subfamily. In terms of assembly, dimer. Requires Ca(2+) as cofactor. In terms of tissue distribution, expressed by the venom gland.

The protein localises to the secreted. It carries out the reaction a 1,2-diacyl-sn-glycero-3-phosphocholine + H2O = a 1-acyl-sn-glycero-3-phosphocholine + a fatty acid + H(+). In terms of biological role, PLA2 catalyzes the calcium-dependent hydrolysis of the 2-acyl groups in 3-sn-phosphoglycerides. The chain is Acidic phospholipase A2 beta from Crotalus adamanteus (Eastern diamondback rattlesnake).